We begin with the raw amino-acid sequence, 749 residues long: Homeobox-leucine zipper protein ROC7 (749 aa).

Positions 26–98 are disordered; sequence LDQHQQHQHQ…KKRYHRHTQH (73 aa). Residues 46-57 show a composition bias toward basic and acidic residues; that stretch reads SDGRAPRDELEM. Positions 68-78 are enriched in gly residues; it reads SGGGGGGGGSG. Basic residues predominate over residues 86–97; that stretch reads RPRKKRYHRHTQ. A DNA-binding region (homeobox) is located at residues 88–147; the sequence is RKKRYHRHTQHQIQELEAFFKECPHPDDKQRKELSRELGLEPLQVKFWFQNKRTQMKTQH. Residues 137 to 218 adopt a coiled-coil conformation; that stretch reads QNKRTQMKTQ…DRISAIAAKY (82 aa). The START domain maps to 256-494; the sequence is ADFDKPLVIE…LERQCERLAS (239 aa).

The protein belongs to the HD-ZIP homeobox family. Class IV subfamily.

The protein resides in the nucleus. In terms of biological role, probable transcription factor. This is Homeobox-leucine zipper protein ROC7 (ROC7) from Oryza sativa subsp. indica (Rice).